Here is a 292-residue protein sequence, read N- to C-terminus: Homoserine kinase (292 aa).

ATP is bound at residue Arg81–Ala91.

This sequence belongs to the GHMP kinase family. Homoserine kinase subfamily.

It localises to the cytoplasm. The catalysed reaction is L-homoserine + ATP = O-phospho-L-homoserine + ADP + H(+). It participates in amino-acid biosynthesis; L-threonine biosynthesis; L-threonine from L-aspartate: step 4/5. Functionally, catalyzes the ATP-dependent phosphorylation of L-homoserine to L-homoserine phosphate. This chain is Homoserine kinase, found in Pyrococcus furiosus (strain ATCC 43587 / DSM 3638 / JCM 8422 / Vc1).